The following is a 303-amino-acid chain: Putative deoxyribose-phosphate aldolase (303 aa).

Residue Asp-157 is the Proton donor/acceptor of the active site. Lys-220 (schiff-base intermediate with acetaldehyde) is an active-site residue. Catalysis depends on Lys-256, which acts as the Proton donor/acceptor.

This sequence belongs to the DeoC/FbaB aldolase family. DeoC type 2 subfamily.

It carries out the reaction 2-deoxy-D-ribose 5-phosphate = D-glyceraldehyde 3-phosphate + acetaldehyde. The protein operates within carbohydrate degradation; 2-deoxy-D-ribose 1-phosphate degradation; D-glyceraldehyde 3-phosphate and acetaldehyde from 2-deoxy-alpha-D-ribose 1-phosphate: step 2/2. Functionally, catalyzes a reversible aldol reaction between acetaldehyde and D-glyceraldehyde 3-phosphate to generate 2-deoxy-D-ribose 5-phosphate. The polypeptide is Putative deoxyribose-phosphate aldolase (Caenorhabditis elegans).